A 2139-amino-acid chain; its full sequence is U5 small nuclear ribonucleoprotein 200 kDa helicase (2139 aa).

Residues Ser-17 and Ser-26 each carry the phosphoserine modification. Residues 39-80 (EVLSLVGKLEGTRMGDKAQRTKPQMQEERRAKRRKRDEDRHD) are disordered. Lys-46 is covalently cross-linked (Glycyl lysine isopeptide (Lys-Gly) (interchain with G-Cter in SUMO2)). Basic and acidic residues predominate over residues 48 to 80 (EGTRMGDKAQRTKPQMQEERRAKRRKRDEDRHD). Positions 54 to 84 (DKAQRTKPQMQEERRAKRRKRDEDRHDINKM) form a coiled coil. A Phosphoserine modification is found at Ser-225. A Phosphothreonine modification is found at Thr-389. Positions 395–2132 (DLDQGGEALA…YKFSVDVKEA (1738 aa)) are interaction with C9orf78 and WBP4. The region spanning 490–673 (RAALETDENL…FLRVDPAKGL (184 aa)) is the Helicase ATP-binding 1 domain. 503 to 510 (APTGAGKT) serves as a coordination point for ATP. The short motif at 615 to 618 (DEIH) is the DEAH box element. In terms of domain architecture, Helicase C-terminal 1 spans 684–921 (PLEQTYVGIT…NAKDAVNWLG (238 aa)). Phosphotyrosine is present on Tyr-709. Residue Lys-944 forms a Glycyl lysine isopeptide (Lys-Gly) (interchain with G-Cter in SUMO) linkage. Lys-971 carries the N6-acetyllysine; alternate modification. Lys-971 is covalently cross-linked (Glycyl lysine isopeptide (Lys-Gly) (interchain with G-Cter in SUMO); alternate). Residues 982–1289 (TELGRIASHY…SCETQLPVSF (308 aa)) form the SEC63 1 domain. Glycyl lysine isopeptide (Lys-Gly) (interchain with G-Cter in SUMO) cross-links involve residues Lys-1071 and Lys-1199. Residues 1285–2139 (LPVSFRHLIL…KEAETDSDSD (855 aa)) form an interaction with TSSC4 region. A Helicase ATP-binding 2 domain is found at 1340–1515 (NTVYNSDDNV…WLGCSATSTF (176 aa)). Position 1353–1360 (1353–1360 (APTGSGKT)) interacts with ATP. Thr-1431 is modified (phosphothreonine). Residues 1457 to 1460 (DEVH) carry the DEAH box motif. A Helicase C-terminal 2 domain is found at 1548–1756 (PVYHAITKHS…TIENKQDAVD (209 aa)). Position 1768 is a phosphothreonine (Thr-1768). Positions 1815–2127 (PLNLGMIAAY…GCDQEYKFSV (313 aa)) constitute an SEC63 2 domain. Ser-2005 is subject to Phosphoserine. A Glycyl lysine isopeptide (Lys-Gly) (interchain with G-Cter in SUMO) cross-link involves residue Lys-2094. Phosphothreonine is present on Thr-2134. Phosphoserine is present on residues Ser-2136 and Ser-2138.

The protein belongs to the helicase family. SKI2 subfamily. As to quaternary structure, component of a core complex containing at least PRPF8, SNRNP200, EFTUD2 and SNRNP40. Component of the U5 snRNP and U4/U6-U5 tri-snRNP complexes, building blocks of the spliceosome. Component of the U4/U6-U5 tri-snRNP complex composed of the U4, U6 and U5 snRNAs and at least PRPF3, PRPF4, PRPF6, PRPF8, PRPF31, SNRNP200, TXNL4A, SNRNP40, DDX23, CD2BP2, PPIH, SNU13, EFTUD2, SART1 and USP39. Component of precatalytic, catalytic and postcatalytic spliceosomal complexes. Component of the minor spliceosome, which splices U12-type introns. Interacts with C9orf78; the interaction is direct and mutually exclusive with its interaction with WBP4. Interacts with WBP4; the interaction is mutually exclusive with its interaction with C9orf78. Interacts with PRPF8. Interacts with TSSC4; the interaction is direct, excludes recruitment of C9ORF78 and WBP4 to SNRNP200 and negatively regulates its RNA helicase activity.

The protein resides in the nucleus. It carries out the reaction ATP + H2O = ADP + phosphate + H(+). Functionally, catalyzes the ATP-dependent unwinding of U4/U6 RNA duplices, an essential step in the assembly of a catalytically active spliceosome. Plays a role in pre-mRNA splicing as core component of precatalytic, catalytic and postcatalytic spliceosomal complexes. As a component of the minor spliceosome, involved in the splicing of U12-type introns in pre-mRNAs. Involved in spliceosome assembly, activation and disassembly. Mediates changes in the dynamic network of RNA-RNA interactions in the spliceosome. In Rattus norvegicus (Rat), this protein is U5 small nuclear ribonucleoprotein 200 kDa helicase (Snrnp200).